The chain runs to 155 residues: Alanine- and arginine-rich domain-containing protein (155 aa).

This Homo sapiens (Human) protein is Alanine- and arginine-rich domain-containing protein (AARD).